A 362-amino-acid chain; its full sequence is Heat-inducible transcription repressor HrcA (362 aa).

Belongs to the HrcA family.

In terms of biological role, negative regulator of class I heat shock genes (grpE-dnaK-dnaJ and groELS operons). Prevents heat-shock induction of these operons. The protein is Heat-inducible transcription repressor HrcA of Nitrobacter winogradskyi (strain ATCC 25391 / DSM 10237 / CIP 104748 / NCIMB 11846 / Nb-255).